The following is a 706-amino-acid chain: F-box/WD repeat-containing protein 7 (706 aa).

Residues 1 to 157 (MNQELLSVGS…IVDLPIHQRS (157 aa)) are disordered. S26 bears the Phosphoserine mark. The span at 32–54 (QMNRVLEEEQQQPRHQEEEHAAR) shows a compositional bias: basic and acidic residues. The segment covering 69–83 (NDPQQGQLEENNNRF) has biased composition (polar residues). The span at 86 to 128 (VDEDSSGNQEEQEEDEEHAGEQDEEDEEEEEMDQESDDFDQSD) shows a compositional bias: acidic residues. Residues 129-138 (DSSREDEHTH) are compositionally biased toward basic and acidic residues. T204 carries the post-translational modification Phosphothreonine. At S226 the chain carries Phosphoserine. One can recognise an F-box domain in the interval 277–323 (RDFISLLPKELALYVLSFLEPKDLLQAAQTCRYWRILAEDNLLWREK). WD repeat units follow at residues 377 to 417 (GHDD…RTLV), 419 to 455 (HTGG…CIHT), 458 to 497 (GHTS…HVLM), 499 to 535 (HVAA…CLHT), 538 to 577 (GHTN…HTLT), 579 to 617 (HQSL…QTLQ), and 621 to 658 (KHQS…FIRN).

In terms of assembly, homodimer; homodimerization plays a role in substrate binding and/or ubiquitination and degradation. Component of the SCF(FBXW7) complex consisting of CUL1, RBX1, SKP1 and FBXW7. Interacts (via F-box domain) with SKP1. Interacts (via F-box domain) with pseudophosphatase STYX; the interaction is direct and prevents FBXW7 interaction with SKP1. Interacts with cyclin-E (CCNE1 or CCNE2). Interacts with PSEN1. Forms a trimeric complex with NOTCH1 and SGK1. Interacts with NOTCH1 intracellular domain/NICD and NOTCH4 intracellular domain/NICD. Interacts with NOTCH2 intracellular domain (N2ICD). Interacts with MYC (when phosphorylated). Interacts with USP28, counteracting ubiquitination of MYC. Interacts with JUN. Found in a complex with JUN and PRR7. Interacts with JUN and PRR7; the interaction inhibits ubiquitination-mediated JUN degradation, promoting its phosphorylation and transcriptional activity. Interacts (when phosphorylated at Thr-204) with PIN1, disrupting FBXW7 dimerization and promoting FBXW7 autoubiquitination and degradation. Interacts with UBE2QL1. Interacts with FAM83D; promotes FBXW7 degradation. Interacts with MYCN; FBXW7 competes with AURKA for binding to unphosphorylated MYCN but not for binding to phosphorylated MYCN. Interacts with STOML1. Interacts with NFE2L1. Interacts with USP36, counteracting ubiquitination of MYC. Interacts with RICTOR; mediates RICTOR ubiquitination and degradation.l Interacts with USP38, counteracting ubiquitination of MYC. (Microbial infection) In case of infection, interacts with T.annulata PIN1 (TaPIN1); leading to FBXW7 autoubiquitination and subsequent degradation: FBXW7 degradation promotes stabilization of JUN, which promotes cell transformation. Phosphorylation at Thr-204 promotes interaction with PIN1, leading to disrupt FBXW7 dimerization and promoting FBXW7 autoubiquitination and degradation. Phosphorylated by ATM at Ser-26 in response to DNA damage, promoting recruitment to DNA damage sites and 'Lys-63'-linked ubiquitination of phosphorylated XRCC4. In terms of processing, ubiquitinated: autoubiquitinates following phosphorylation at Thr-204 and subsequent interaction with PIN1. Ubiquitination leads to its degradation.

The protein localises to the nucleus. It is found in the nucleoplasm. Its subcellular location is the chromosome. Its pathway is protein modification; protein ubiquitination. In terms of biological role, substrate recognition component of a SCF (SKP1-CUL1-F-box protein) E3 ubiquitin-protein ligase complex which mediates the ubiquitination and subsequent proteasomal degradation of target proteins. Recognizes and binds phosphorylated sites/phosphodegrons within target proteins and thereafter brings them to the SCF complex for ubiquitination. Identified substrates include cyclin-E (CCNE1 or CCNE2), DISC1, JUN, MYC, NOTCH1 released notch intracellular domain (NICD), NOTCH2, MCL1, MLST8, RICTOR, and probably PSEN1. Acts as a negative regulator of JNK signaling by binding to phosphorylated JUN and promoting its ubiquitination and subsequent degradation. SCF(FBXW7) complex mediates the ubiquitination and subsequent degradation of NFE2L1. Involved in bone homeostasis and negative regulation of osteoclast differentiation. Also able to promote 'Lys-63'-linked ubiquitination in response to DNA damage. The SCF(FBXW7) complex facilitates double-strand break repair following phosphorylation by ATM: phosphorylation promotes localization to sites of double-strand breaks and 'Lys-63'-linked ubiquitination of phosphorylated XRCC4, enhancing DNA non-homologous end joining. The sequence is that of F-box/WD repeat-containing protein 7 from Bos taurus (Bovine).